Reading from the N-terminus, the 195-residue chain is UPF0314 protein RHECIAT_CH0004233 (195 aa).

Transmembrane regions (helical) follow at residues 15–35 (FWFV…YLMG), 64–84 (WYTP…YLIL), 127–147 (GDSI…FFFA), and 150–170 (APVA…GYVI).

It belongs to the UPF0314 family.

The protein localises to the cell membrane. The protein is UPF0314 protein RHECIAT_CH0004233 of Rhizobium etli (strain CIAT 652).